Reading from the N-terminus, the 151-residue chain is 3-dehydroquinate dehydratase (151 aa).

The active-site Proton acceptor is the Tyr-26. Substrate-binding residues include Asn-75, His-81, and Asp-88. His-101 acts as the Proton donor in catalysis. Substrate-binding positions include 102 to 103 (LS) and Arg-112.

It belongs to the type-II 3-dehydroquinase family. As to quaternary structure, homododecamer.

The enzyme catalyses 3-dehydroquinate = 3-dehydroshikimate + H2O. The protein operates within metabolic intermediate biosynthesis; chorismate biosynthesis; chorismate from D-erythrose 4-phosphate and phosphoenolpyruvate: step 3/7. In terms of biological role, catalyzes a trans-dehydration via an enolate intermediate. The polypeptide is 3-dehydroquinate dehydratase (Shewanella denitrificans (strain OS217 / ATCC BAA-1090 / DSM 15013)).